We begin with the raw amino-acid sequence, 155 residues long: V-type proton ATPase 16 kDa proteolipid subunit c (155 aa).

Residues 1 to 10 are Lumenal-facing; that stretch reads MADIKNNPEY. The chain crosses the membrane as a helical span at residues 11 to 33; the sequence is SSFFGVMGASSAMVFSAMGAAYG. Residues 34 to 55 lie on the Cytoplasmic side of the membrane; the sequence is TAKSGTGIAAMSVMRPELIMKS. The chain crosses the membrane as a helical span at residues 56 to 76; sequence IIPVVMAGIIAIYGLVVAVLI. Residues 77–92 are Lumenal-facing; that stretch reads ANSLTDGITLYRSFLQ. A helical transmembrane segment spans residues 93-114; that stretch reads LGAGLSVGLSGLAAGFAIGIVG. The Cytoplasmic segment spans residues 115–131; sequence DAGVRGTAQQPRLFVGM. Residues 132–152 form a helical membrane-spanning segment; that stretch reads ILILIFAEVLGLYGLIVALIL. Over 153–155 the chain is Lumenal; it reads STK.

The protein belongs to the V-ATPase proteolipid subunit family. As to quaternary structure, V-ATPase is a heteromultimeric enzyme made up of two complexes: the ATP-hydrolytic V1 complex and the proton translocation V0 complex. The V1 complex consists of three catalytic AB heterodimers that form a heterohexamer, three peripheral stalks each consisting of EG heterodimers, one central rotor including subunits D and F, and the regulatory subunits C and H. The proton translocation complex V0 consists of the proton transport subunit a, a ring of proteolipid subunits c9c'', rotary subunit d, subunits e and f, and the accessory subunits ATP6AP1/Ac45 and ATP6AP2/PRR. Interacts with the V0 complex V-ATPase subunit a4 ATP6V0A4. Interacts with LASS2. Interacts with RNF182; this interaction leads to ubiquitination and degradation via the proteasome pathway. In terms of processing, ubiquitinated by RNF182, leading to its degradation via the ubiquitin-proteasome pathway.

The protein resides in the cytoplasmic vesicle. Its subcellular location is the clathrin-coated vesicle membrane. It is found in the secretory vesicle. The protein localises to the synaptic vesicle membrane. Its function is as follows. Proton-conducting pore forming subunit of the V0 complex of vacuolar(H+)-ATPase (V-ATPase), a multisubunit enzyme composed of a peripheral complex (V1) that hydrolyzes ATP and a membrane integral complex (V0) that translocates protons. V-ATPase is responsible for acidifying and maintaining the pH of intracellular compartments and in some cell types, is targeted to the plasma membrane, where it is responsible for acidifying the extracellular environment. This Mus musculus (Mouse) protein is V-type proton ATPase 16 kDa proteolipid subunit c (Atp6v0c).